A 187-amino-acid chain; its full sequence is MGNKQTVFTHEQLEAYQDCTFFTRKEIMRLFYRYQDLAPQLVPLDYTTCPDVKVPYELIGSMPELKDNPFRQRIAQVFSEDGDGHMTLDNFLDMFSVMSEMAPRDLKAYYAFKIYDFNNDDYICAWDLEQTVTKLTRGGLSAEEVSLVCEKVLDEADGDHDGRLSLEDFQNMILRAPDFLSTFHIRI.

EF-hand domains are found at residues 66 to 101, 103 to 138, and 144 to 179; these read KDNP…MSEM, PRDL…LTRG, and EVSL…APDF. Aspartate 116, asparagine 118, aspartate 120, tyrosine 122, aspartate 127, aspartate 157, aspartate 159, aspartate 161, arginine 163, and aspartate 168 together coordinate Ca(2+).

Monomer and homodimer. Interacts with ITGA2B (via C-terminus cytoplasmic tail region); the interaction is stabilized/increased in a calcium and magnesium-dependent manner. Interacts with TMC1.

Acts a an auxiliary subunit of the sensory mechanoelectrical transduction (MET) channel in hair cells. Plays a role in regulating hair cell MET channel localization and function. This chain is Calcium and integrin-binding family member 3 (CIB3), found in Homo sapiens (Human).